The chain runs to 118 residues: DNA-binding protein MmarC5_1518 (118 aa).

The span at 1 to 12 (MNPEEIRQRRLQ) shows a compositional bias: basic and acidic residues. The disordered stretch occupies residues 1-35 (MNPEEIRQRRLQEMQAKAQEQGAEDPEAQRQAQEQ).

Belongs to the PDCD5 family.

This Methanococcus maripaludis (strain C5 / ATCC BAA-1333) protein is DNA-binding protein MmarC5_1518.